We begin with the raw amino-acid sequence, 519 residues long: 2,3-bisphosphoglycerate-independent phosphoglycerate mutase (519 aa).

Residues Asp-18 and Ser-68 each coordinate Mn(2+). Ser-68 serves as the catalytic Phosphoserine intermediate. Residues His-129, 159–160, Arg-191, Arg-197, 267–270, and Lys-341 contribute to the substrate site; these read RD and RADR. Residues Asp-408, His-412, Asp-449, His-450, and His-468 each coordinate Mn(2+).

This sequence belongs to the BPG-independent phosphoglycerate mutase family. In terms of assembly, monomer. The cofactor is Mn(2+).

It catalyses the reaction (2R)-2-phosphoglycerate = (2R)-3-phosphoglycerate. It functions in the pathway carbohydrate degradation; glycolysis; pyruvate from D-glyceraldehyde 3-phosphate: step 3/5. Catalyzes the interconversion of 2-phosphoglycerate and 3-phosphoglycerate. The sequence is that of 2,3-bisphosphoglycerate-independent phosphoglycerate mutase from Coxiella burnetii (strain RSA 493 / Nine Mile phase I).